Consider the following 466-residue polypeptide: Ribulose bisphosphate carboxylase large chain (466 aa).

K5 is subject to N6,N6,N6-trimethyllysine. 2 residues coordinate substrate: N114 and T164. The Proton acceptor role is filled by K166. Residue K168 participates in substrate binding. Positions 192, 194, and 195 each coordinate Mg(2+). K192 carries the N6-carboxylysine modification. H285 serves as the catalytic Proton acceptor. 3 residues coordinate substrate: R286, H318, and S370.

It belongs to the RuBisCO large chain family. Type I subfamily. As to quaternary structure, heterohexadecamer of 8 large chains and 8 small chains. It depends on Mg(2+) as a cofactor.

The protein localises to the plastid. It localises to the chloroplast. The catalysed reaction is 2 (2R)-3-phosphoglycerate + 2 H(+) = D-ribulose 1,5-bisphosphate + CO2 + H2O. It catalyses the reaction D-ribulose 1,5-bisphosphate + O2 = 2-phosphoglycolate + (2R)-3-phosphoglycerate + 2 H(+). RuBisCO catalyzes two reactions: the carboxylation of D-ribulose 1,5-bisphosphate, the primary event in carbon dioxide fixation, as well as the oxidative fragmentation of the pentose substrate in the photorespiration process. Both reactions occur simultaneously and in competition at the same active site. The chain is Ribulose bisphosphate carboxylase large chain from Drosera regia (King sundew).